Reading from the N-terminus, the 97-residue chain is Small ribosomal subunit protein uS19 (97 aa).

It belongs to the universal ribosomal protein uS19 family.

Its function is as follows. Protein S19 forms a complex with S13 that binds strongly to the 16S ribosomal RNA. The protein is Small ribosomal subunit protein uS19 of Pelagibacter ubique (strain HTCC1062).